The sequence spans 356 residues: tRNA N6-adenosine threonylcarbamoyltransferase (356 aa).

His-116 and His-120 together coordinate Fe cation. Substrate is bound by residues 139 to 143 (IVSGG), Asp-174, Gly-187, Asp-191, and Asn-281. A Fe cation-binding site is contributed by Asp-309.

The protein belongs to the KAE1 / TsaD family. Fe(2+) serves as cofactor.

The protein localises to the cytoplasm. It catalyses the reaction L-threonylcarbamoyladenylate + adenosine(37) in tRNA = N(6)-L-threonylcarbamoyladenosine(37) in tRNA + AMP + H(+). Functionally, required for the formation of a threonylcarbamoyl group on adenosine at position 37 (t(6)A37) in tRNAs that read codons beginning with adenine. Is involved in the transfer of the threonylcarbamoyl moiety of threonylcarbamoyl-AMP (TC-AMP) to the N6 group of A37, together with TsaE and TsaB. TsaD likely plays a direct catalytic role in this reaction. This chain is tRNA N6-adenosine threonylcarbamoyltransferase, found in Frankia casuarinae (strain DSM 45818 / CECT 9043 / HFP020203 / CcI3).